We begin with the raw amino-acid sequence, 216 residues long: Fucoxanthin-chlorophyll a-c binding protein C, chloroplastic (216 aa).

The N-terminal 38 residues, 1 to 38 (MKSAIMAVASAAPGLRGPSAFNGAALTTSAKSSSAMKM), are a transit peptide targeting the chloroplast. The next 3 membrane-spanning stretches (helical) occupy residues 80 to 100 (IAML…PGML), 121 to 141 (IPPG…LAVM), and 182 to 202 (GRAA…NNKP).

It belongs to the fucoxanthin chlorophyll protein family. In terms of assembly, the LHC complex of chromophytic algae is composed of fucoxanthin, chlorophyll A and C bound non-covalently by fucoxanthin chlorophyll proteins (FCPs). The ratio of pigments in this LHC is; fucoxanthin: chlorophyll C: chlorophyll A; (0.6-1): (0.1-0.3): (1).

The protein resides in the plastid. The protein localises to the chloroplast thylakoid membrane. Its function is as follows. The light-harvesting complex (LHC) functions as a light receptor, it captures and delivers excitation energy to photosystems with which it is closely associated. Energy is transferred from the carotenoid and chlorophyll C (or B) to chlorophyll A and the photosynthetic reaction centers where it is used to synthesize ATP and reducing power. This chain is Fucoxanthin-chlorophyll a-c binding protein C, chloroplastic (FCPC), found in Macrocystis pyrifera (Giant kelp).